The following is a 208-amino-acid chain: Probable transcriptional regulator ycf29 (208 aa).

The 108-residue stretch at 11-118 folds into the Response regulatory domain; that stretch reads KLILIEPEEH…ELIAIISNLI (108 aa). D60 bears the 4-aspartylphosphate mark. In terms of domain architecture, HTH luxR-type spans 146–208; the sequence is TSFSYINLTV…NRIQILSYFN (63 aa).

Its subcellular location is the plastid. The protein localises to the chloroplast. The sequence is that of Probable transcriptional regulator ycf29 (ycf29) from Guillardia theta (Cryptophyte).